The sequence spans 482 residues: Bifunctional protein GlmU (482 aa).

Residues Met1–Arg238 form a pyrophosphorylase region. UDP-N-acetyl-alpha-D-glucosamine is bound by residues Leu12 to Gly15, Lys26, Gln79, and Gly84 to Thr85. Asp110 provides a ligand contact to Mg(2+). Residues Gly147, Glu163, Asn178, and Asn236 each contribute to the UDP-N-acetyl-alpha-D-glucosamine site. Asn236 lines the Mg(2+) pocket. The segment at Val239–Ala259 is linker. Positions Gly260–Asp482 are N-acetyltransferase. Residues Arg341 and Lys359 each contribute to the UDP-N-acetyl-alpha-D-glucosamine site. The Proton acceptor role is filled by His371. UDP-N-acetyl-alpha-D-glucosamine contacts are provided by Tyr374 and Asn385. Acetyl-CoA-binding positions include Ala388, Asn394 to Tyr395, Ser413, Ala431, and Arg448.

The protein in the N-terminal section; belongs to the N-acetylglucosamine-1-phosphate uridyltransferase family. In the C-terminal section; belongs to the transferase hexapeptide repeat family. In terms of assembly, homotrimer. It depends on Mg(2+) as a cofactor.

Its subcellular location is the cytoplasm. The enzyme catalyses alpha-D-glucosamine 1-phosphate + acetyl-CoA = N-acetyl-alpha-D-glucosamine 1-phosphate + CoA + H(+). It carries out the reaction N-acetyl-alpha-D-glucosamine 1-phosphate + UTP + H(+) = UDP-N-acetyl-alpha-D-glucosamine + diphosphate. It participates in nucleotide-sugar biosynthesis; UDP-N-acetyl-alpha-D-glucosamine biosynthesis; N-acetyl-alpha-D-glucosamine 1-phosphate from alpha-D-glucosamine 6-phosphate (route II): step 2/2. Its pathway is nucleotide-sugar biosynthesis; UDP-N-acetyl-alpha-D-glucosamine biosynthesis; UDP-N-acetyl-alpha-D-glucosamine from N-acetyl-alpha-D-glucosamine 1-phosphate: step 1/1. The protein operates within bacterial outer membrane biogenesis; LPS lipid A biosynthesis. Its function is as follows. Catalyzes the last two sequential reactions in the de novo biosynthetic pathway for UDP-N-acetylglucosamine (UDP-GlcNAc). The C-terminal domain catalyzes the transfer of acetyl group from acetyl coenzyme A to glucosamine-1-phosphate (GlcN-1-P) to produce N-acetylglucosamine-1-phosphate (GlcNAc-1-P), which is converted into UDP-GlcNAc by the transfer of uridine 5-monophosphate (from uridine 5-triphosphate), a reaction catalyzed by the N-terminal domain. This Streptomyces avermitilis (strain ATCC 31267 / DSM 46492 / JCM 5070 / NBRC 14893 / NCIMB 12804 / NRRL 8165 / MA-4680) protein is Bifunctional protein GlmU.